The primary structure comprises 263 residues: Putative TATA-binding protein pB263R (263 aa).

Belongs to the asfivirus B263R family.

In terms of biological role, putative TATA-binding protein. In African swine fever virus (isolate Pig/Kenya/KEN-50/1950) (ASFV), this protein is Putative TATA-binding protein pB263R.